The following is a 232-amino-acid chain: Demethylmenaquinone methyltransferase (232 aa).

S-adenosyl-L-methionine-binding positions include threonine 58, aspartate 79, and 104–105 (NA).

It belongs to the class I-like SAM-binding methyltransferase superfamily. MenG/UbiE family.

The catalysed reaction is a 2-demethylmenaquinol + S-adenosyl-L-methionine = a menaquinol + S-adenosyl-L-homocysteine + H(+). It participates in quinol/quinone metabolism; menaquinone biosynthesis; menaquinol from 1,4-dihydroxy-2-naphthoate: step 2/2. Methyltransferase required for the conversion of demethylmenaquinol (DMKH2) to menaquinol (MKH2). The polypeptide is Demethylmenaquinone methyltransferase (Bacillus licheniformis (strain ATCC 14580 / DSM 13 / JCM 2505 / CCUG 7422 / NBRC 12200 / NCIMB 9375 / NCTC 10341 / NRRL NRS-1264 / Gibson 46)).